Consider the following 426-residue polypeptide: Limonoid 21-O-acetyltransferse (426 aa).

Catalysis depends on proton acceptor residues His152 and Asp365.

The protein belongs to the plant acyltransferase family. As to quaternary structure, monomer. Expressed in maturing fruits and in juice vesicles.

The enzyme catalyses isomeliandiol + acetyl-CoA = 21-O-acetyl-isomeliandiol + CoA. It participates in secondary metabolite biosynthesis; terpenoid biosynthesis. In terms of biological role, acetyltransferase involved in the biosynthesis of limonoids triterpene natural products such as limonin, a compound with insecticidal activity responsible for the bitter taste in citrus. Catalyzes the formation of 21-O-acetyl-isomeliandiol from isomeliandiol. This is Limonoid 21-O-acetyltransferse from Citrus sinensis (Sweet orange).